Consider the following 208-residue polypeptide: Large ribosomal subunit protein uL3 (208 aa).

A disordered region spans residues 116–146 (GFQGAIKRHGQSRGPMAHGSRYHRRPGSMGP).

It belongs to the universal ribosomal protein uL3 family. Part of the 50S ribosomal subunit. Forms a cluster with proteins L14 and L19.

One of the primary rRNA binding proteins, it binds directly near the 3'-end of the 23S rRNA, where it nucleates assembly of the 50S subunit. This is Large ribosomal subunit protein uL3 from Streptococcus mutans serotype c (strain ATCC 700610 / UA159).